The chain runs to 454 residues: Natural cytotoxicity triggering receptor 3 ligand 1 (454 aa).

Residues 1-24 (MTWRAAASTCAALLILLWALTTEG) form the signal peptide. Over 25–262 (DLKVEMMAGG…SETEKTDNFS (238 aa)) the chain is Extracellular. The Ig-like V-type domain occupies 27-138 (KVEMMAGGTQ…LKAQGTVQLE (112 aa)). Residues Asn43 and Asn57 are each glycosylated (N-linked (GlcNAc...) asparagine). Cys48 and Cys122 are oxidised to a cystine. Interaction with NCR3 regions lie at residues 59–62 (TSMG) and 127–130 (TPLK). Residues 143–244 (PASRLLLDQV…LHTPLRSNFT (102 aa)) form the Ig-like C1-type domain. A disulfide bridge connects residues Cys163 and Cys228. N-linked (GlcNAc...) asparagine glycans are attached at residues Asn174, Asn208, Asn216, Asn242, and Asn260. The helical transmembrane segment at 263-283 (IHWWPISFIGVGLVLLIVLIP) threads the bilayer. Over 284-454 (WKKICNKSSS…QPPTLLLPLQ (171 aa)) the chain is Cytoplasmic. Positions 291-429 (SSSAYTPLKC…APILPVSPIW (139 aa)) are retroviral-Gag-like. The tract at residues 395 to 454 (GKSIDDNSTKSEKQTPREHSDAVPDAPILPVSPIWEPPPATTSTTPVLSSQPPTLLLPLQ) is disordered. Residues 397–416 (SIDDNSTKSEKQTPREHSDA) show a composition bias toward basic and acidic residues. A compositionally biased stretch (low complexity) spans 435–454 (TTSTTPVLSSQPPTLLLPLQ).

Monomer. Interacts specifically with NCR3, but not with other natural killer cell-activating receptors, including NCR1, NCR2 and KLRK1. As to expression, not detected in any normal tissue tested. Expressed at the surface of several tumor cell lines including T and B-lymphomas, myeloid leukemias, melanomas, carcinomas and large T SV40 antigen-transformed cells (at protein level).

It is found in the cell membrane. Triggers NCR3-dependent natural killer cell activation. The chain is Natural cytotoxicity triggering receptor 3 ligand 1 (NCR3LG1) from Homo sapiens (Human).